Here is a 608-residue protein sequence, read N- to C-terminus: UvrABC system protein C (608 aa).

The GIY-YIG domain occupies 16–94; that stretch reads NRPGVYRMFD…IKEWRPPYNI (79 aa). The UVR domain occupies 204–239; it reads NALADELNVGMEQAAMRLDFEKAAELRDQVAILRRV.

It belongs to the UvrC family. Interacts with UvrB in an incision complex.

The protein localises to the cytoplasm. The UvrABC repair system catalyzes the recognition and processing of DNA lesions. UvrC both incises the 5' and 3' sides of the lesion. The N-terminal half is responsible for the 3' incision and the C-terminal half is responsible for the 5' incision. This is UvrABC system protein C from Pseudomonas aeruginosa (strain LESB58).